A 92-amino-acid chain; its full sequence is Small ribosomal subunit protein bS20 (92 aa).

The segment at 1–25 (MANSAQARKRARQAAKANSHNSALR) is disordered.

It belongs to the bacterial ribosomal protein bS20 family.

In terms of biological role, binds directly to 16S ribosomal RNA. The sequence is that of Small ribosomal subunit protein bS20 from Paraburkholderia phymatum (strain DSM 17167 / CIP 108236 / LMG 21445 / STM815) (Burkholderia phymatum).